The primary structure comprises 459 residues: tRNA modification GTPase MnmE (459 aa).

(6S)-5-formyl-5,6,7,8-tetrahydrofolate-binding residues include Arg-22, Glu-85, and Arg-124. A TrmE-type G domain is found at 221-380 (GLSTVIVGKP…LEIQIRDLFF (160 aa)). K(+) is bound at residue Asn-231. GTP contacts are provided by residues 231 to 236 (NVGKSS), 250 to 256 (TEVAGTT), and 275 to 278 (DTAG). Residue Ser-235 participates in Mg(2+) binding. Thr-250, Val-252, and Thr-255 together coordinate K(+). A Mg(2+)-binding site is contributed by Thr-256. Lys-459 is a binding site for (6S)-5-formyl-5,6,7,8-tetrahydrofolate.

It belongs to the TRAFAC class TrmE-Era-EngA-EngB-Septin-like GTPase superfamily. TrmE GTPase family. Homodimer. Heterotetramer of two MnmE and two MnmG subunits. It depends on K(+) as a cofactor.

It localises to the cytoplasm. Functionally, exhibits a very high intrinsic GTPase hydrolysis rate. Involved in the addition of a carboxymethylaminomethyl (cmnm) group at the wobble position (U34) of certain tRNAs, forming tRNA-cmnm(5)s(2)U34. The sequence is that of tRNA modification GTPase MnmE from Staphylococcus aureus (strain Mu3 / ATCC 700698).